Consider the following 445-residue polypeptide: Probable D-serine dehydratase (445 aa).

Lys-111 is subject to N6-(pyridoxal phosphate)lysine.

It belongs to the serine/threonine dehydratase family. DsdA subfamily. Pyridoxal 5'-phosphate is required as a cofactor.

The catalysed reaction is D-serine = pyruvate + NH4(+). The chain is Probable D-serine dehydratase from Burkholderia pseudomallei (strain 1106a).